We begin with the raw amino-acid sequence, 218 residues long: Protein-L-isoaspartate O-methyltransferase (218 aa).

S66 is an active-site residue.

It belongs to the methyltransferase superfamily. L-isoaspartyl/D-aspartyl protein methyltransferase family.

Its subcellular location is the cytoplasm. It catalyses the reaction [protein]-L-isoaspartate + S-adenosyl-L-methionine = [protein]-L-isoaspartate alpha-methyl ester + S-adenosyl-L-homocysteine. Its function is as follows. Catalyzes the methyl esterification of L-isoaspartyl residues in peptides and proteins that result from spontaneous decomposition of normal L-aspartyl and L-asparaginyl residues. It plays a role in the repair and/or degradation of damaged proteins. This is Protein-L-isoaspartate O-methyltransferase from Caulobacter sp. (strain K31).